Here is a 252-residue protein sequence, read N- to C-terminus: Isoprenyl transferase (252 aa).

Aspartate 32 is a catalytic residue. Aspartate 32 contributes to the Mg(2+) binding site. Residues 33–36 (GNGR), tryptophan 37, arginine 45, histidine 49, and 77–79 (STE) contribute to the substrate site. Asparagine 80 serves as the catalytic Proton acceptor. Substrate is bound by residues tryptophan 81, arginine 83, arginine 200, and 206-208 (RLS). Glutamate 219 is a Mg(2+) binding site.

Belongs to the UPP synthase family. As to quaternary structure, homodimer. Mg(2+) serves as cofactor.

In terms of biological role, catalyzes the condensation of isopentenyl diphosphate (IPP) with allylic pyrophosphates generating different type of terpenoids. The polypeptide is Isoprenyl transferase (Listeria monocytogenes serotype 4b (strain F2365)).